We begin with the raw amino-acid sequence, 362 residues long: Homoisocitrate dehydrogenase (362 aa).

79-81 (VQS) lines the NADH pocket. Ser-81 is a binding site for (2R,3S)-homoisocitrate. Phosphoserine occurs at positions 81 and 91. (2R,3S)-homoisocitrate is bound by residues Arg-97, Arg-107, Arg-126, Tyr-133, Lys-196, and Asn-198. An NADH-binding site is contributed by Asn-198. Asp-232, Asp-256, and Asp-260 together coordinate Mg(2+). Residues 289-293 (GSAPD) and Asn-301 each bind NADH.

This sequence belongs to the isocitrate and isopropylmalate dehydrogenases family. Mg(2+) is required as a cofactor.

Its subcellular location is the cytoplasm. The enzyme catalyses (2R,3S)-homoisocitrate + NAD(+) = 2-oxoadipate + CO2 + NADH. It participates in amino-acid biosynthesis; L-lysine biosynthesis via AAA pathway; L-alpha-aminoadipate from 2-oxoglutarate: step 4/5. This is Homoisocitrate dehydrogenase (lys12) from Schizosaccharomyces pombe (strain 972 / ATCC 24843) (Fission yeast).